Reading from the N-terminus, the 518-residue chain is Glutamate--cysteine ligase (518 aa).

Belongs to the glutamate--cysteine ligase type 1 family. Type 1 subfamily.

The enzyme catalyses L-cysteine + L-glutamate + ATP = gamma-L-glutamyl-L-cysteine + ADP + phosphate + H(+). It participates in sulfur metabolism; glutathione biosynthesis; glutathione from L-cysteine and L-glutamate: step 1/2. This is Glutamate--cysteine ligase from Salmonella typhi.